The primary structure comprises 265 residues: Eukaryotic translation initiation factor 3 subunit J (265 aa).

Composition is skewed to acidic residues over residues 1-12 and 26-44; these read MAPERWDDEEDS and DEEEDEVLDSWDAAEDSEV. Disordered regions lie at residues 1 to 113 and 212 to 265; these read MAPE…DADL and TMSN…DDFM. 2 stretches are compositionally biased toward basic and acidic residues: residues 45-65 and 73-86; these read EREKAAKAAEAKAKADAEAAA and RIQEHKEERKKKAE. Residues 61–95 are a coiled coil; that stretch reads AEAAAKKKSKSQRIQEHKEERKKKAEEEDSDSEEE. Positions 87-97 are enriched in acidic residues; sequence EEDSDSEEEDD. Over residues 216 to 228 the composition is skewed to basic and acidic residues; that stretch reads EKMREERAADKGS. Residues 251-265 show a composition bias toward acidic residues; sequence DYDNGDDGLGDDDFM.

Belongs to the eIF-3 subunit J family. Component of the eukaryotic translation initiation factor 3 (eIF-3) complex.

It is found in the cytoplasm. Functionally, component of the eukaryotic translation initiation factor 3 (eIF-3) complex, which is involved in protein synthesis of a specialized repertoire of mRNAs and, together with other initiation factors, stimulates binding of mRNA and methionyl-tRNAi to the 40S ribosome. The eIF-3 complex specifically targets and initiates translation of a subset of mRNAs involved in cell proliferation. In Aspergillus oryzae (strain ATCC 42149 / RIB 40) (Yellow koji mold), this protein is Eukaryotic translation initiation factor 3 subunit J (hcr1).